The primary structure comprises 61 residues: Probable tautomerase lmo2564 (61 aa).

The active-site Proton acceptor; via imino nitrogen is the Pro2.

Belongs to the 4-oxalocrotonate tautomerase family.

The protein is Probable tautomerase lmo2564 of Listeria monocytogenes serovar 1/2a (strain ATCC BAA-679 / EGD-e).